The following is a 152-amino-acid chain: UPF0178 protein YaiI (152 aa).

It belongs to the UPF0178 family.

This Shigella boydii serotype 18 (strain CDC 3083-94 / BS512) protein is UPF0178 protein YaiI.